The chain runs to 339 residues: Heat-inducible transcription repressor HrcA (339 aa).

This sequence belongs to the HrcA family.

Functionally, negative regulator of class I heat shock genes (grpE-dnaK-dnaJ and groELS operons). Prevents heat-shock induction of these operons. This chain is Heat-inducible transcription repressor HrcA, found in Thiobacillus denitrificans (strain ATCC 25259 / T1).